The sequence spans 80 residues: Cytochrome c oxidase subunit 7A1, mitochondrial (80 aa).

The N-terminal 21 residues, 1–21 (MRALRVSQALVRSFSSTARNR), are a transit peptide targeting the mitochondrion. The Mitochondrial matrix segment spans residues 22-46 (LENRVAEKQKIFQADNDLPVHLKGG). Residues 47-75 (ATDNILYRVTMTLCLGGTVYSLYCLGWAS) form a helical membrane-spanning segment. Topologically, residues 76–80 (FPHKK) are mitochondrial intermembrane.

This sequence belongs to the cytochrome c oxidase VIIa family. As to quaternary structure, component of the complex IV (CIV, cytochrome c oxidase), a multisubunit enzyme composed of 14 subunits. The complex is composed of a catalytic core of 3 subunits MT-CO1, MT-CO2 and MT-CO3, encoded in the mitochondrial DNA, and 11 supernumerary subunits COX4I1 (or COX4I2), COX5A, COX5B, COX6A2 (or COX6A1), COX6B1 (or COX6B2), COX6C, COX7A1 (or COX7A2), COX7B, COX7C, COX8B and NDUFA4, which are encoded in the nuclear genome. The complex exists as a monomer or a dimer and forms supercomplexes (SCs) in the inner mitochondrial membrane with NADH-ubiquinone oxidoreductase (complex I, CI) and ubiquinol-cytochrome c oxidoreductase (cytochrome b-c1 complex, complex III, CIII), resulting in different assemblies (supercomplex SCI(1)III(2)IV(1) and megacomplex MCI(2)III(2)IV(2)).

The protein localises to the mitochondrion inner membrane. The protein operates within energy metabolism; oxidative phosphorylation. In terms of biological role, component of the mitochondrial respiratory complex IV (CIV, also named cytochrome c oxidase complex), the last enzyme in the mitochondrial electron transport chain which drives oxidative phosphorylation. The CIV complex is the component of the respiratory chain that catalyzes the reduction of oxygen to water. Acts as an assembly factor that specifically drives the homodimerization of CIV complexes, mediating the formation of mitochondrial respiratory supercomplexes (respirasomes) containing two CIV: supercomplxes with two molecules of CIV show improved activity. Despite being highly expressed in brown adipose tissue, not required for thermogenesis. The chain is Cytochrome c oxidase subunit 7A1, mitochondrial (COX7A1) from Sus scrofa (Pig).